Here is a 440-residue protein sequence, read N- to C-terminus: Chromosome partition protein MukF (440 aa).

Positions 208–236 (LSETSGTLRELQDTLEAAGDKLQANLLRI) are leucine-zipper.

The protein belongs to the MukF family. As to quaternary structure, interacts, and probably forms a ternary complex, with MukE and MukB via its C-terminal region. The complex formation is stimulated by calcium or magnesium. It is required for an interaction between MukE and MukB.

The protein localises to the cytoplasm. The protein resides in the nucleoid. Its function is as follows. Involved in chromosome condensation, segregation and cell cycle progression. May participate in facilitating chromosome segregation by condensation DNA from both sides of a centrally located replisome during cell division. Not required for mini-F plasmid partitioning. Probably acts via its interaction with MukB and MukE. Overexpression results in anucleate cells. It has a calcium binding activity. The polypeptide is Chromosome partition protein MukF (Escherichia coli (strain UTI89 / UPEC)).